A 375-amino-acid polypeptide reads, in one-letter code: Chaperone protein DnaJ (375 aa).

One can recognise a J domain in the interval 5–69; the sequence is DYYEILGVSK…QKRAAYDQYG (65 aa). The segment at 130-208 adopts a CR-type zinc-finger fold; it reads GVTKEIRIPT…CHGHGRVEKA (79 aa). Zn(2+) contacts are provided by Cys-143, Cys-146, Cys-160, Cys-163, Cys-182, Cys-185, Cys-196, and Cys-199. 4 CXXCXGXG motif repeats span residues 143-150, 160-167, 182-189, and 196-203; these read CGVCHGSG, CPTCHGQG, CPHCHGRG, and CNSCHGHG.

This sequence belongs to the DnaJ family. In terms of assembly, homodimer. Requires Zn(2+) as cofactor.

The protein resides in the cytoplasm. In terms of biological role, participates actively in the response to hyperosmotic and heat shock by preventing the aggregation of stress-denatured proteins and by disaggregating proteins, also in an autonomous, DnaK-independent fashion. Unfolded proteins bind initially to DnaJ; upon interaction with the DnaJ-bound protein, DnaK hydrolyzes its bound ATP, resulting in the formation of a stable complex. GrpE releases ADP from DnaK; ATP binding to DnaK triggers the release of the substrate protein, thus completing the reaction cycle. Several rounds of ATP-dependent interactions between DnaJ, DnaK and GrpE are required for fully efficient folding. Also involved, together with DnaK and GrpE, in the DNA replication of plasmids through activation of initiation proteins. This Serratia proteamaculans (strain 568) protein is Chaperone protein DnaJ.